The primary structure comprises 105 residues: Class II hydrophobin 1 (105 aa).

The signal sequence occupies residues 1 to 15 (MQVLLIATLVASVLA). Intrachain disulfides connect C38-C87, C48-C78, C49-C58, and C88-C99.

It belongs to the cerato-ulmin hydrophobin family. Homotetramer. Further self-assembles to form highly ordered films at water-air interfaces through intermolecular interactions.

Its subcellular location is the secreted. It localises to the cell wall. Aerial growth, conidiation, and dispersal of filamentous fungi in the environment rely upon a capability of their secreting small amphipathic proteins called hydrophobins (HPBs) with low sequence identity. Class I can self-assemble into an outermost layer of rodlet bundles on aerial cell surfaces, conferring cellular hydrophobicity that supports fungal growth, development and dispersal; whereas Class II form highly ordered films at water-air interfaces through intermolecular interactions but contribute nothing to the rodlet structure. HYD1 is a class II hydrophobin that plays roles in conidiation and cuticle-bypassing infection by regulating the transcripts of frequency clock protein frq, and velvet protein vosA, as well as primordium formation via the mitogen-activated protein kinase signaling pathway. Also participates in stress response, including tolerance of mycelia to osmotic and oxidative stresses, and conidia to high or low temperature. Acts as a defensive factor against Calcarisporium cordycipiticola infection, probably via the formation of a physical barrier to inhibit the pathogen infection owing to its hydrophobicity or binding to the effector of C.cordycipiticola, hindering the recognition of the pathogen. Finally, regulates the transcription of the AreA transcription factor at different developmental stages via a positive feedback loop. The sequence is that of Class II hydrophobin 1 from Cordyceps militaris (Caterpillar fungus).